We begin with the raw amino-acid sequence, 471 residues long: Argininosuccinate lyase (471 aa).

It belongs to the lyase 1 family. Argininosuccinate lyase subfamily.

The protein resides in the cytoplasm. The catalysed reaction is 2-(N(omega)-L-arginino)succinate = fumarate + L-arginine. Its pathway is amino-acid biosynthesis; L-arginine biosynthesis; L-arginine from L-ornithine and carbamoyl phosphate: step 3/3. The polypeptide is Argininosuccinate lyase (Renibacterium salmoninarum (strain ATCC 33209 / DSM 20767 / JCM 11484 / NBRC 15589 / NCIMB 2235)).